We begin with the raw amino-acid sequence, 435 residues long: Phospholipase A1 EG1, chloroplastic/mitochondrial (435 aa).

The transit peptide at M1–G31 directs the protein to the chloroplast and mitochondrion. Positions G264–G268 match the GXSXG motif. The active-site Acyl-ester intermediate is S266. Residues D324 and H371 each act as charge relay system in the active site.

It belongs to the AB hydrolase superfamily. Lipase family.

It is found in the mitochondrion. It localises to the plastid. The protein localises to the chloroplast. The catalysed reaction is a 1,2-diacyl-sn-glycero-3-phosphocholine + H2O = a 2-acyl-sn-glycero-3-phosphocholine + a fatty acid + H(+). In terms of biological role, phospholipase that releases free fatty acids from phospholipids. Catalyzes the initial step of jasmonate (JA) biosynthesis. Required for the biosynthesis of endogenous JA in seedling, inflorescence and spikelets. Not essential for JA biosynthesis after wounding. Mediates spikelet development and specification of empty-glume identity. Functions in a high temperature-dependent manner to maintain floral developmental robustness under heat stress conditions. Functions by safeguarding the expression of several floral identity genes, such as MADS1, MADS6 and G1. The protein is Phospholipase A1 EG1, chloroplastic/mitochondrial of Oryza sativa subsp. indica (Rice).